Consider the following 500-residue polypeptide: Lysine--tRNA ligase (500 aa).

Glutamate 410 and glutamate 417 together coordinate Mg(2+).

Belongs to the class-II aminoacyl-tRNA synthetase family. As to quaternary structure, homodimer. Mg(2+) is required as a cofactor.

Its subcellular location is the cytoplasm. It carries out the reaction tRNA(Lys) + L-lysine + ATP = L-lysyl-tRNA(Lys) + AMP + diphosphate. In Shewanella denitrificans (strain OS217 / ATCC BAA-1090 / DSM 15013), this protein is Lysine--tRNA ligase.